Reading from the N-terminus, the 382-residue chain is Flap endonuclease 1 (382 aa).

Residues 1 to 104 (MGIKGLSQVI…GELEKRSERR (104 aa)) form an N-domain region. Asp34 provides a ligand contact to Mg(2+). Positions 47 and 70 each coordinate DNA. The Mg(2+) site is built by Asp86, Glu158, Glu160, Asp179, and Asp181. The I-domain stretch occupies residues 122-253 (EAEKFERRLV…KKAVELIRQH (132 aa)). Glu158 is a binding site for DNA. Residues Gly231 and Asp233 each coordinate DNA. Asp233 contacts Mg(2+). The segment at 336–344 (TQGRIDSFF) is interaction with PCNA. The interval 358 to 382 (KRKAEEAEKAKKGAKKGGPPKKRAK) is disordered. The segment covering 359-368 (RKAEEAEKAK) has biased composition (basic and acidic residues). Residues 369-382 (KGAKKGGPPKKRAK) are compositionally biased toward basic residues.

The protein belongs to the XPG/RAD2 endonuclease family. FEN1 subfamily. Interacts with PCNA. Three molecules of crn-1 bind to one PCNA trimer with each molecule binding to one PCNA monomer. PCNA stimulates the nuclease activity without altering cleavage specificity. Interacts with cps-6. The cofactor is Mg(2+). Phosphorylated. Phosphorylation upon DNA damage induces relocalization to the nuclear plasma.

The protein localises to the nucleus. The protein resides in the nucleolus. It localises to the nucleoplasm. It is found in the mitochondrion. Structure-specific nuclease with 5'-flap endonuclease and 5'-3' exonuclease activities involved in DNA replication and repair. During DNA replication, cleaves the 5'-overhanging flap structure that is generated by displacement synthesis when DNA polymerase encounters the 5'-end of a downstream Okazaki fragment. It enters the flap from the 5'-end and then tracks to cleave the flap base, leaving a nick for ligation. Also involved in the long patch base excision repair (LP-BER) pathway, by cleaving within the apurinic/apyrimidinic (AP) site-terminated flap. Acts as a genome stabilization factor that prevents flaps from equilibrating into structures that lead to duplications and deletions. Also possesses 5'-3' exonuclease activity on nicked or gapped double-stranded DNA, and exhibits RNase H activity. Also involved in replication and repair of rDNA and in repairing mitochondrial DNA. Can associate and cooperate with cps-6 to promote stepwise DNA fragmentation, utilizing the endonuclease activity of cps-6 and both of its own 5'-3' exonuclease activity and gap-dependent endonuclease activity. May play a critical role in switching the state of cells from DNA replication/repair to DNA degradation during apoptosis. The sequence is that of Flap endonuclease 1 from Caenorhabditis elegans.